Reading from the N-terminus, the 230-residue chain is Cytochrome c oxidase subunit 2 (230 aa).

Over 1–14 (MAHPSQLGFQDAAS) the chain is Mitochondrial intermembrane. Residues 15–45 (PVMEELLHFHDHALMIVFLISTLVLYIIVAM) form a helical membrane-spanning segment. Over 46–59 (VSTKLTNKYILDSQ) the chain is Mitochondrial matrix. Residues 60 to 87 (EIEIIWTVLPAVILILIALPSLRILYLM) form a helical membrane-spanning segment. Topologically, residues 88 to 230 (DEINDPHLTI…SWSSLMLEDA (143 aa)) are mitochondrial intermembrane. The Cu cation site is built by His-161, Cys-196, Glu-198, Cys-200, His-204, and Met-207. Position 198 (Glu-198) interacts with Mg(2+).

This sequence belongs to the cytochrome c oxidase subunit 2 family. Component of the cytochrome c oxidase (complex IV, CIV), a multisubunit enzyme composed of 14 subunits. The complex is composed of a catalytic core of 3 subunits MT-CO1, MT-CO2 and MT-CO3, encoded in the mitochondrial DNA, and 11 supernumerary subunits COX4I, COX5A, COX5B, COX6A, COX6B, COX6C, COX7A, COX7B, COX7C, COX8 and NDUFA4, which are encoded in the nuclear genome. The complex exists as a monomer or a dimer and forms supercomplexes (SCs) in the inner mitochondrial membrane with NADH-ubiquinone oxidoreductase (complex I, CI) and ubiquinol-cytochrome c oxidoreductase (cytochrome b-c1 complex, complex III, CIII), resulting in different assemblies (supercomplex SCI(1)III(2)IV(1) and megacomplex MCI(2)III(2)IV(2)). Found in a complex with TMEM177, COA6, COX18, COX20, SCO1 and SCO2. Interacts with TMEM177 in a COX20-dependent manner. Interacts with COX20. Interacts with COX16. It depends on Cu cation as a cofactor.

The protein resides in the mitochondrion inner membrane. It catalyses the reaction 4 Fe(II)-[cytochrome c] + O2 + 8 H(+)(in) = 4 Fe(III)-[cytochrome c] + 2 H2O + 4 H(+)(out). In terms of biological role, component of the cytochrome c oxidase, the last enzyme in the mitochondrial electron transport chain which drives oxidative phosphorylation. The respiratory chain contains 3 multisubunit complexes succinate dehydrogenase (complex II, CII), ubiquinol-cytochrome c oxidoreductase (cytochrome b-c1 complex, complex III, CIII) and cytochrome c oxidase (complex IV, CIV), that cooperate to transfer electrons derived from NADH and succinate to molecular oxygen, creating an electrochemical gradient over the inner membrane that drives transmembrane transport and the ATP synthase. Cytochrome c oxidase is the component of the respiratory chain that catalyzes the reduction of oxygen to water. Electrons originating from reduced cytochrome c in the intermembrane space (IMS) are transferred via the dinuclear copper A center (CU(A)) of subunit 2 and heme A of subunit 1 to the active site in subunit 1, a binuclear center (BNC) formed by heme A3 and copper B (CU(B)). The BNC reduces molecular oxygen to 2 water molecules using 4 electrons from cytochrome c in the IMS and 4 protons from the mitochondrial matrix. In Gadus morhua (Atlantic cod), this protein is Cytochrome c oxidase subunit 2 (mt-co2).